The primary structure comprises 140 residues: Pro-vaccinia growth factor (140 aa).

The signal sequence occupies residues Met1–Phe18. Topologically, residues Ala19–Tyr100 are extracellular. N-linked (GlcNAc...) asparagine; by host glycosylation occurs at Asn34. The EGF-like domain maps to Ala41–Gln81. 3 cysteine pairs are disulfide-bonded: Cys45-Cys58, Cys53-Cys69, and Cys71-Cys80. Asn95 carries an N-linked (GlcNAc...) asparagine; by host glycan. A helical membrane pass occupies residues Ile101–Leu121. Residues Ser122–Pro140 are Cytoplasmic-facing.

It belongs to the orthopoxvirus OPG019 family. As to quaternary structure, vaccinia growth factor interacts with host EGFR and promotes EGFR dimerization.

It is found in the host membrane. Its subcellular location is the secreted. Functionally, stimulates cellular proliferation (hyperplasia)and mobility around infected cells to promote rapid and efficient spread of infection. This effect is beneficial for virus replication in vivo, because poxviruses replicate possibly better in proliferating cells than in quiescent cells. Acts by binding host EGFR, inducing its dimerization, autophosphorylation and leading to activation of several cellular pathways regulating cell proliferation or cell survival. The activation by host EGFR of mitogen activated protein kinases (MAPK) and extracellular-signal regulated kinases (ERK) are essential for the positive effect of vaccinia growth factor on poxvirus virulence in vivo. The sequence is that of Pro-vaccinia growth factor (OPG019) from Vaccinia virus (strain L-IVP) (VACV).